Here is a 587-residue protein sequence, read N- to C-terminus: Protein IQ-DOMAIN 31 (587 aa).

The disordered stretch occupies residues 57 to 80 (ETNTVDRSGGMLETQNVGPEEISD). At Ser79 the chain carries Phosphoserine. 3 IQ domains span residues 112–140 (REIA…GIIR), 141–163 (LQAL…SVMG), and 164–188 (IVRL…VYRK). Positions 149 to 159 (LVRRQAVATLF) are calmodulin-binding. The Nuclear localization signal signature appears at 176–183 (IRKSDIGV). Residues 344-587 (NPVVESSIQP…AKTTPAERKR (244 aa)) are disordered. 2 stretches are compositionally biased toward basic and acidic residues: residues 357-373 (PRKE…KTRE) and 390-413 (CDEK…EMEV). Positions 424 to 434 (ALDSSLVNQID) are enriched in polar residues. Composition is skewed to basic and acidic residues over residues 435–472 (SNEK…ENQK) and 482–494 (KTER…HHET). 2 stretches are compositionally biased toward polar residues: residues 495–506 (SPSIPSYMQATK) and 544–561 (RITS…SGDK).

The protein belongs to the IQD family. In terms of assembly, binds to multiple calmodulin (CaM) in the presence of Ca(2+) and CaM-like proteins.

The protein resides in the nucleus. It localises to the nucleus envelope. It is found in the cytoplasm. The protein localises to the cytoskeleton. Its subcellular location is the cell membrane. Functionally, may be involved in cooperative interactions with calmodulins or calmodulin-like proteins. Recruits calmodulin proteins to microtubules, thus being a potential scaffold in cellular signaling and trafficking. May associate with nucleic acids and regulate gene expression at the transcriptional or post-transcriptional level. In Arabidopsis thaliana (Mouse-ear cress), this protein is Protein IQ-DOMAIN 31.